A 919-amino-acid polypeptide reads, in one-letter code: Phosphoenolpyruvate carboxylase (919 aa).

Residues His138 and Lys579 contribute to the active site.

The protein belongs to the PEPCase type 1 family. Requires Mg(2+) as cofactor.

The enzyme catalyses oxaloacetate + phosphate = phosphoenolpyruvate + hydrogencarbonate. In terms of biological role, forms oxaloacetate, a four-carbon dicarboxylic acid source for the tricarboxylic acid cycle. This Corynebacterium efficiens (strain DSM 44549 / YS-314 / AJ 12310 / JCM 11189 / NBRC 100395) protein is Phosphoenolpyruvate carboxylase (ppc).